The following is a 223-amino-acid chain: uncharacterized protein (223 aa).

This is an uncharacterized protein from Treponema pallidum (strain Nichols).